The sequence spans 222 residues: MITFSSLLVTFSAISTSLAIPGSILPKRSPMNFVLQRNESSLVRRATPNYEQDYTTGGDVIYTPSGSSFTVDWSTEDDFVVGLGWTTGSTNPINFSGTFGIGSGTALLSIYGWSENPLVEYYIVEDSASPPSFGTVKGSVTSDGSSYTIWENQRVNEPSIVGTATFNQYISVRSSPRKSGTVTVENHFQAWAALGMNLGTLNYQVLAVEGWGGEGAATQTVS.

Positions 1 to 19 (MITFSSLLVTFSAISTSLA) are cleaved as a signal peptide. In terms of domain architecture, GH11 spans 36–222 (QRNESSLVRR…GEGAATQTVS (187 aa)). N-linked (GlcNAc...) asparagine glycans are attached at residues Asn-38 and Asn-94. Glu-120 acts as the Nucleophile in catalysis. Glu-209 acts as the Proton donor in catalysis.

The protein belongs to the glycosyl hydrolase 11 (cellulase G) family.

It catalyses the reaction Endohydrolysis of (1-&gt;4)-beta-D-xylosidic linkages in xylans.. Its pathway is glycan degradation; xylan degradation. Its function is as follows. Endo-1,4-beta-xylanase involved in the hydrolysis of xylan, a major structural heterogeneous polysaccharide found in plant biomass representing the second most abundant polysaccharide in the biosphere, after cellulose. May act as an elicitor of plant defense responses in certain plants but does not exhibit any cell death when transiently expressed in N.benthamiana. The polypeptide is Ethylene-inducing xylanase 2 (Botryotinia fuckeliana (strain B05.10) (Noble rot fungus)).